The following is a 239-amino-acid chain: Ankyrin repeat domain-containing protein 49 (239 aa).

The residue at position 49 (S49) is a Phosphoserine. ANK repeat units lie at residues 73-103 (DPSRLLLWAAEKNRLTTVRRLLSEKATHVNT), 107-136 (DEYTPLHRAAYSGHLDIVQELIAQGADVHA), 140-169 (DGWTPLHSACKWNNTRVASFLLQHDADINA), and 173-206 (GLLTPLHLAAGNRDSKDTLELLLMNRYVKPGLKN).

Widely expressed in fetus, at a high level in fetal liver, brain and lung.

It is found in the nucleus. Functionally, induces HBG1 expression. May have a role in spermatogenesis where it promotes autophagy in response to serum starvation, via the NF-kappaB pathway. This Homo sapiens (Human) protein is Ankyrin repeat domain-containing protein 49 (ANKRD49).